Here is a 197-residue protein sequence, read N- to C-terminus: Ribonuclease HII (197 aa).

The RNase H type-2 domain maps to 4 to 197 (IWVCGVDEAG…VRKALESVAS (194 aa)). Positions 10, 11, and 106 each coordinate a divalent metal cation.

This sequence belongs to the RNase HII family. Mn(2+) serves as cofactor. It depends on Mg(2+) as a cofactor.

It localises to the cytoplasm. It catalyses the reaction Endonucleolytic cleavage to 5'-phosphomonoester.. Functionally, endonuclease that specifically degrades the RNA of RNA-DNA hybrids. The polypeptide is Ribonuclease HII (Polynucleobacter necessarius subsp. necessarius (strain STIR1)).